We begin with the raw amino-acid sequence, 134 residues long: Fluoride-specific ion channel FluC (134 aa).

A run of 4 helical transmembrane segments spans residues 7–27 (LAVAIGGSLGAMSRYLVTIMA), 38–58 (GTLLVNTLGSFLAGFFLIVLV), 69–89 (LFLFTGFLGAFTTFSSFAAES), and 110–130 (VGSLSMVFIGTLVAKYVLLGH). 2 residues coordinate Na(+): Gly77 and Thr80.

It belongs to the fluoride channel Fluc/FEX (TC 1.A.43) family.

It is found in the cell inner membrane. The enzyme catalyses fluoride(in) = fluoride(out). With respect to regulation, na(+) is not transported, but it plays an essential structural role and its presence is essential for fluoride channel function. Its function is as follows. Fluoride-specific ion channel. Important for reducing fluoride concentration in the cell, thus reducing its toxicity. In Legionella pneumophila (strain Paris), this protein is Fluoride-specific ion channel FluC.